Consider the following 475-residue polypeptide: Argininosuccinate lyase (475 aa).

The protein belongs to the lyase 1 family. Argininosuccinate lyase subfamily.

The protein resides in the cytoplasm. The enzyme catalyses 2-(N(omega)-L-arginino)succinate = fumarate + L-arginine. The protein operates within amino-acid biosynthesis; L-arginine biosynthesis; L-arginine from L-ornithine and carbamoyl phosphate: step 3/3. The polypeptide is Argininosuccinate lyase (Leifsonia xyli subsp. xyli (strain CTCB07)).